Reading from the N-terminus, the 93-residue chain is Protein FMP16, mitochondrial (93 aa).

Residues 1–25 constitute a mitochondrion transit peptide; the sequence is MLRTTFLRTPRQLMRKSPRASFSIV. Residues 30 to 93 are disordered; sequence FPHLKNNQDE…EQNRPDDGVY (64 aa). A compositionally biased stretch (basic and acidic residues) spans 35–93; sequence NNQDEAEKKEQGLFDSNKKRLDTLEHGKNPDYKQPGMEDLKKKGDDARIEQNRPDDGVY.

It localises to the mitochondrion. This Saccharomyces cerevisiae (strain ATCC 204508 / S288c) (Baker's yeast) protein is Protein FMP16, mitochondrial (FMP16).